Reading from the N-terminus, the 331-residue chain is 6-phosphogluconolactonase (331 aa).

Lys-287 carries the N6-acetyllysine modification.

Belongs to the cycloisomerase 2 family.

The enzyme catalyses 6-phospho-D-glucono-1,5-lactone + H2O = 6-phospho-D-gluconate + H(+). It participates in carbohydrate degradation; pentose phosphate pathway; D-ribulose 5-phosphate from D-glucose 6-phosphate (oxidative stage): step 2/3. In terms of biological role, catalyzes the hydrolysis of 6-phosphogluconolactone to 6-phosphogluconate. The polypeptide is 6-phosphogluconolactonase (Shigella flexneri).